We begin with the raw amino-acid sequence, 124 residues long: Seripauperin-3 (124 aa).

The chain crosses the membrane as a helical span at residues 7-24; sequence IAAGVAAIAAGIAAAPAT.

It belongs to the SRP1/TIP1 family. Seripauperin subfamily.

Its subcellular location is the membrane. The chain is Seripauperin-3 (PAU3) from Saccharomyces cerevisiae (strain ATCC 204508 / S288c) (Baker's yeast).